A 393-amino-acid chain; its full sequence is Formate-dependent phosphoribosylglycinamide formyltransferase (393 aa).

Residues Glu-22–Leu-23 and Glu-82 each bind N(1)-(5-phospho-beta-D-ribosyl)glycinamide. ATP is bound by residues Arg-114, Lys-155, Ser-160–Gln-165, Glu-195–Ile-198, and Glu-203. An ATP-grasp domain is found at Arg-119 to Leu-308. Mg(2+) contacts are provided by Glu-267 and Glu-279. N(1)-(5-phospho-beta-D-ribosyl)glycinamide is bound by residues Asp-286, Lys-356, and Arg-363–Arg-364.

This sequence belongs to the PurK/PurT family. In terms of assembly, homodimer.

It carries out the reaction N(1)-(5-phospho-beta-D-ribosyl)glycinamide + formate + ATP = N(2)-formyl-N(1)-(5-phospho-beta-D-ribosyl)glycinamide + ADP + phosphate + H(+). The protein operates within purine metabolism; IMP biosynthesis via de novo pathway; N(2)-formyl-N(1)-(5-phospho-D-ribosyl)glycinamide from N(1)-(5-phospho-D-ribosyl)glycinamide (formate route): step 1/1. Its function is as follows. Involved in the de novo purine biosynthesis. Catalyzes the transfer of formate to 5-phospho-ribosyl-glycinamide (GAR), producing 5-phospho-ribosyl-N-formylglycinamide (FGAR). Formate is provided by PurU via hydrolysis of 10-formyl-tetrahydrofolate. In Pseudomonas putida (strain W619), this protein is Formate-dependent phosphoribosylglycinamide formyltransferase.